The sequence spans 419 residues: Zinc metalloprotease RasP (419 aa).

A run of 4 helical transmembrane segments spans residues 4-24 (VIAFILIFGTLVFFHELGHLI), 173-193 (IAAGPIMNFILAYVILVMLGL), 349-369 (LAAFLSINLGIVNLLPIPALD), and 391-411 (EAFVVFIGVAFLMLLMLVVTW). His18 is a Zn(2+) binding site. Residue Glu19 is part of the active site. His22 serves as a coordination point for Zn(2+). Residues 184–269 (AYVILVMLGL…KLTKYVTPEA (86 aa)) enclose the PDZ domain.

The protein belongs to the peptidase M50B family. Requires Zn(2+) as cofactor.

It localises to the cell membrane. In terms of biological role, is responsible for Site-2 cleavage of the RsiW anti-sigma factor. This results, after a third proteolytic step catalyzed by the ClpXP protease, in the release of SigW and the transcription activation of the genes under the control of the sigma-W factor. The protein is Zinc metalloprotease RasP (rasP) of Bacillus licheniformis (strain ATCC 14580 / DSM 13 / JCM 2505 / CCUG 7422 / NBRC 12200 / NCIMB 9375 / NCTC 10341 / NRRL NRS-1264 / Gibson 46).